The sequence spans 101 residues: MDPVDPNLEPWNHPGSQPKTPCNKCFCKVCCWHCQVCFLNKGLGISYGRKKRKHRRGTPQSSKGHQDPVPKQPLPTTRGNPTGPKESKKEVASKAEADQCD.

The segment at 1-24 (MDPVDPNLEPWNHPGSQPKTPCNK) is interaction with human CREBBP. The segment at 1–48 (MDPVDPNLEPWNHPGSQPKTPCNKCFCKVCCWHCQVCFLNKGLGISYG) is transactivation. The Zn(2+) site is built by cysteine 22, cysteine 25, and cysteine 27. The tract at residues 22-37 (CNKCFCKVCCWHCQVC) is cysteine-rich. Lysine 28 is subject to N6-acetyllysine; by host PCAF. Zn(2+) contacts are provided by cysteine 30, histidine 33, cysteine 34, and cysteine 37. Residues 38–48 (FLNKGLGISYG) are core. Positions 48 to 57 (GRKKRKHRRG) are enriched in basic residues. The disordered stretch occupies residues 48 to 101 (GRKKRKHRRGTPQSSKGHQDPVPKQPLPTTRGNPTGPKESKKEVASKAEADQCD). A Nuclear localization signal, RNA-binding (TAR), and protein transduction motif is present at residues 49–57 (RKKRKHRRG). Positions 49–86 (RKKRKHRRGTPQSSKGHQDPVPKQPLPTTRGNPTGPKE) are interaction with the host capping enzyme RNGTT. Residues lysine 50 and lysine 51 each carry the N6-acetyllysine; by host EP300 and GCN5L2 modification. Arginine 52 is subject to Asymmetric dimethylarginine; by host PRMT6. Residue lysine 71 forms a Glycyl lysine isopeptide (Lys-Gly) (interchain with G-Cter in ubiquitin) linkage. Positions 85-101 (KESKKEVASKAEADQCD) are enriched in basic and acidic residues.

The protein belongs to the lentiviruses Tat family. Interacts with host CCNT1. Associates with the P-TEFb complex composed at least of Tat, P-TEFb (CDK9 and CCNT1), TAR RNA, RNA Pol II. Recruits the HATs CREBBP, TAF1/TFIID, EP300, PCAF and GCN5L2. Interacts with host KAT5/Tip60; this interaction targets the latter to degradation. Interacts with the host deacetylase SIRT1. Interacts with host capping enzyme RNGTT; this interaction stimulates RNGTT. Binds to host KDR, and to the host integrins ITGAV/ITGB3 and ITGA5/ITGB1. Interacts with host KPNB1/importin beta-1 without previous binding to KPNA1/importin alpha-1. Interacts with EIF2AK2. Interacts with host nucleosome assembly protein NAP1L1; this interaction may be required for the transport of Tat within the nucleus, since the two proteins interact at the nuclear rim. Interacts with host C1QBP/SF2P32; this interaction involves lysine-acetylated Tat. Interacts with the host chemokine receptors CCR2, CCR3 and CXCR4. Interacts with host DPP4/CD26; this interaction may trigger an anti-proliferative effect. Interacts with host LDLR. Interacts with the host extracellular matrix metalloproteinase MMP1. Interacts with host PRMT6; this interaction mediates Tat's methylation. Interacts with, and is ubiquitinated by MDM2/Hdm2. Interacts with host PSMC3 and HTATIP2. Interacts with STAB1; this interaction may overcome SATB1-mediated repression of IL2 and IL2RA (interleukin) in T cells by binding to the same domain than HDAC1. Interacts (when acetylated) with human CDK13, thereby increasing HIV-1 mRNA splicing and promoting the production of the doubly spliced HIV-1 protein Nef. Interacts with host TBP; this interaction modulates the activity of transcriptional pre-initiation complex. Interacts with host RELA. Interacts with host PLSCR1; this interaction negatively regulates Tat transactivation activity by altering its subcellular distribution. Asymmetrical arginine methylation by host PRMT6 seems to diminish the transactivation capacity of Tat and affects the interaction with host CCNT1. In terms of processing, acetylation by EP300, CREBBP, GCN5L2/GCN5 and PCAF regulates the transactivation activity of Tat. EP300-mediated acetylation of Lys-50 promotes dissociation of Tat from the TAR RNA through the competitive binding to PCAF's bromodomain. In addition, the non-acetylated Tat's N-terminus can also interact with PCAF. PCAF-mediated acetylation of Lys-28 enhances Tat's binding to CCNT1. Lys-50 is deacetylated by SIRT1. Post-translationally, polyubiquitination by host MDM2 does not target Tat to degradation, but activates its transactivation function and fosters interaction with CCNT1 and TAR RNA. Phosphorylated by EIF2AK2 on serine and threonine residues adjacent to the basic region important for TAR RNA binding and function. Phosphorylation of Tat by EIF2AK2 is dependent on the prior activation of EIF2AK2 by dsRNA.

It is found in the host nucleus. It localises to the host nucleolus. The protein localises to the host cytoplasm. Its subcellular location is the secreted. Its function is as follows. Transcriptional activator that increases RNA Pol II processivity, thereby increasing the level of full-length viral transcripts. Recognizes a hairpin structure at the 5'-LTR of the nascent viral mRNAs referred to as the transactivation responsive RNA element (TAR) and recruits the cyclin T1-CDK9 complex (P-TEFb complex) that will in turn hyperphosphorylate the RNA polymerase II to allow efficient elongation. The CDK9 component of P-TEFb and other Tat-activated kinases hyperphosphorylate the C-terminus of RNA Pol II that becomes stabilized and much more processive. Other factors such as HTATSF1/Tat-SF1, SUPT5H/SPT5, and HTATIP2 are also important for Tat's function. Besides its effect on RNA Pol II processivity, Tat induces chromatin remodeling of proviral genes by recruiting the histone acetyltransferases (HATs) CREBBP, EP300 and PCAF to the chromatin. This also contributes to the increase in proviral transcription rate, especially when the provirus integrates in transcriptionally silent region of the host genome. To ensure maximal activation of the LTR, Tat mediates nuclear translocation of NF-kappa-B by interacting with host RELA. Through its interaction with host TBP, Tat may also modulate transcription initiation. Tat can reactivate a latently infected cell by penetrating in it and transactivating its LTR promoter. In the cytoplasm, Tat is thought to act as a translational activator of HIV-1 mRNAs. In terms of biological role, extracellular circulating Tat can be endocytosed by surrounding uninfected cells via the binding to several surface receptors such as CD26, CXCR4, heparan sulfate proteoglycans (HSPG) or LDLR. Neurons are rarely infected, but they internalize Tat via their LDLR. Through its interaction with nuclear HATs, Tat is potentially able to control the acetylation-dependent cellular gene expression. Modulates the expression of many cellular genes involved in cell survival, proliferation or in coding for cytokines or cytokine receptors. Tat plays a role in T-cell and neurons apoptosis. Tat induced neurotoxicity and apoptosis probably contribute to neuroAIDS. Circulating Tat also acts as a chemokine-like and/or growth factor-like molecule that binds to specific receptors on the surface of the cells, affecting many cellular pathways. In the vascular system, Tat binds to ITGAV/ITGB3 and ITGA5/ITGB1 integrins dimers at the surface of endothelial cells and competes with bFGF for heparin-binding sites, leading to an excess of soluble bFGF. This chain is Protein Tat, found in Homo sapiens (Human).